A 180-amino-acid chain; its full sequence is ATP synthase subunit delta (180 aa).

The protein belongs to the ATPase delta chain family. In terms of assembly, F-type ATPases have 2 components, F(1) - the catalytic core - and F(0) - the membrane proton channel. F(1) has five subunits: alpha(3), beta(3), gamma(1), delta(1), epsilon(1). CF(0) has four main subunits: a(1), b(1), b'(1) and c(10-14). The alpha and beta chains form an alternating ring which encloses part of the gamma chain. F(1) is attached to F(0) by a central stalk formed by the gamma and epsilon chains, while a peripheral stalk is formed by the delta, b and b' chains.

It localises to the cellular thylakoid membrane. Functionally, f(1)F(0) ATP synthase produces ATP from ADP in the presence of a proton or sodium gradient. F-type ATPases consist of two structural domains, F(1) containing the extramembraneous catalytic core and F(0) containing the membrane proton channel, linked together by a central stalk and a peripheral stalk. During catalysis, ATP synthesis in the catalytic domain of F(1) is coupled via a rotary mechanism of the central stalk subunits to proton translocation. In terms of biological role, this protein is part of the stalk that links CF(0) to CF(1). It either transmits conformational changes from CF(0) to CF(1) or is implicated in proton conduction. The chain is ATP synthase subunit delta from Prochlorococcus marinus (strain MIT 9515).